The following is a 207-amino-acid chain: GILT-like protein 2 (207 aa).

An N-terminal signal peptide occupies residues 1-19 (MRAAVFVCLLLGWVGVATP). C40 and C43 are oxidised to a cystine. An N-linked (GlcNAc...) asparagine glycan is attached at N182.

The protein belongs to the GILT family.

The protein localises to the secreted. In terms of biological role, probable lysosomal thiol reductase that can reduce protein disulfide bonds. Involved in the immune response to bacterial infection. The protein is GILT-like protein 2 of Drosophila melanogaster (Fruit fly).